A 152-amino-acid chain; its full sequence is UPF0178 protein YE1167 (152 aa).

This sequence belongs to the UPF0178 family.

The sequence is that of UPF0178 protein YE1167 from Yersinia enterocolitica serotype O:8 / biotype 1B (strain NCTC 13174 / 8081).